The sequence spans 569 residues: Tetratricopeptide repeat protein 22 (569 aa).

TPR repeat units lie at residues 66 to 99, 101 to 133, 203 to 237, 260 to 294, 295 to 328, 383 to 418, and 432 to 465; these read PAVR…HPGN, NAWA…MGLA, ATLY…LRQV, KDTF…AKNQ, PPIL…LRDP, FKAY…ALVF, and PELQ…DDAG.

This chain is Tetratricopeptide repeat protein 22 (TTC22), found in Homo sapiens (Human).